The primary structure comprises 1163 residues: Integrin alpha-X (1163 aa).

The signal sequence occupies residues 1–19 (MTRTRAALLLFTALATSLG). Residues 20-1107 (FNLDTEELTA…EKYKVHNPTP (1088 aa)) lie on the Extracellular side of the membrane. FG-GAP repeat units lie at residues 23–78 (DTEE…ACEP) and 79–138 (IGLQ…TQRL). Residue N61 is glycosylated (N-linked (GlcNAc...) asparagine). A disulfide bridge connects residues C69 and C76. N-linked (GlcNAc...) asparagine glycosylation occurs at N89. 2 disulfides stabilise this stretch: C108-C126 and C116-C145. 4 residues coordinate Mg(2+): D157, S159, S161, and D259. The region spanning 165–339 (RNFATMMNFV…KEKIFAIEGT (175 aa)) is the VWFA domain. FG-GAP repeat units follow at residues 340–391 (ETTS…PTFI), 392–443 (NMSQ…SRQW), 444–504 (RMKA…WRRW), 507–565 (DAVL…PSIS), and 570–630 (QRIA…FIPA). N392 is a glycosylation site (N-linked (GlcNAc...) asparagine). Ca(2+) contacts are provided by D466, D468, D470, and D474. A disulfide bond links C495 and C506. Ca(2+)-binding residues include D530, N532, D534, D538, D593, D597, and D601. 2 disulfides stabilise this stretch: C639/C722 and C655/C712. N-linked (GlcNAc...) asparagine glycosylation is found at N697 and N735. Disulfide bonds link C771–C777 and C848–C863. N-linked (GlcNAc...) asparagine glycans are attached at residues N899 and N939. Cystine bridges form between C998–C1022 and C1027–C1032. The N-linked (GlcNAc...) asparagine glycan is linked to N1050. The helical transmembrane segment at 1108-1128 (LIVGSSIGGLLLLALITAVLY) threads the bilayer. At 1129–1163 (KVGFFKRQYKEMMEEANGQIAPENGTQTPSPPSEK) the chain is on the cytoplasmic side. Positions 1131 to 1135 (GFFKR) match the GFFKR motif motif.

Belongs to the integrin alpha chain family. In terms of assembly, heterodimer of an alpha and a beta subunit. Alpha-X associates with beta-2. As to expression, predominantly expressed in monocytes and granulocytes.

The protein resides in the membrane. In terms of biological role, integrin alpha-X/beta-2 is a receptor for fibrinogen. It recognizes the sequence G-P-R in fibrinogen. It mediates cell-cell interaction during inflammatory responses. It is especially important in monocyte adhesion and chemotaxis. This Homo sapiens (Human) protein is Integrin alpha-X (ITGAX).